The following is a 340-amino-acid chain: Eukaryotic translation initiation factor 3 subunit I (340 aa).

WD repeat units follow at residues 8 to 47, 50 to 91, 150 to 189, 194 to 233, and 291 to 330; these read GHERSLNQIKFNRDGDLLFSVAKDKIVCAWWSANGERLGT, GHQG…KVWD, CTESKATVAGWSYLGKYIIAGHEDGSVSQYDGKTGEQLEN, EFDHQINDIQFSQDRTYFITASKDKSAKLISSRNLAILKT, and GHFGPLNTVDVHPNGTAYASGGEDGYVRVHHFDKPYFDFM.

It belongs to the eIF-3 subunit I family. Component of the eukaryotic translation initiation factor 3 (eIF-3) complex.

It localises to the cytoplasm. Component of the eukaryotic translation initiation factor 3 (eIF-3) complex, which is involved in protein synthesis of a specialized repertoire of mRNAs and, together with other initiation factors, stimulates binding of mRNA and methionyl-tRNAi to the 40S ribosome. The eIF-3 complex specifically targets and initiates translation of a subset of mRNAs involved in cell proliferation. In Aspergillus fumigatus (strain CBS 144.89 / FGSC A1163 / CEA10) (Neosartorya fumigata), this protein is Eukaryotic translation initiation factor 3 subunit I (tif34).